The primary structure comprises 453 residues: Phosphoglucosamine mutase (453 aa).

S109 functions as the Phosphoserine intermediate in the catalytic mechanism. Mg(2+)-binding residues include S109, D246, D248, and D250. At S109 the chain carries Phosphoserine.

The protein belongs to the phosphohexose mutase family. Mg(2+) serves as cofactor. Activated by phosphorylation.

It catalyses the reaction alpha-D-glucosamine 1-phosphate = D-glucosamine 6-phosphate. Functionally, catalyzes the conversion of glucosamine-6-phosphate to glucosamine-1-phosphate. This is Phosphoglucosamine mutase from Leifsonia xyli subsp. xyli (strain CTCB07).